Here is a 457-residue protein sequence, read N- to C-terminus: tRNA(Ile)-lysidine synthase (457 aa).

An ATP-binding site is contributed by 27-32 (SGGLDS).

The protein belongs to the tRNA(Ile)-lysidine synthase family.

The protein resides in the cytoplasm. It carries out the reaction cytidine(34) in tRNA(Ile2) + L-lysine + ATP = lysidine(34) in tRNA(Ile2) + AMP + diphosphate + H(+). Ligates lysine onto the cytidine present at position 34 of the AUA codon-specific tRNA(Ile) that contains the anticodon CAU, in an ATP-dependent manner. Cytidine is converted to lysidine, thus changing the amino acid specificity of the tRNA from methionine to isoleucine. This is tRNA(Ile)-lysidine synthase from Hamiltonella defensa subsp. Acyrthosiphon pisum (strain 5AT).